The following is a 66-amino-acid chain: Xenoxin-2 (66 aa).

Intrachain disulfides connect Cys3–Cys24, Cys17–Cys37, Cys43–Cys58, and Cys59–Cys64.

In terms of tissue distribution, expressed by the skin dorsal glands.

The protein localises to the secreted. Lacks alpha-neurotoxic activity, has apparently no antibacterial activity, nor anti-coagulant potency. The polypeptide is Xenoxin-2 (Xenopus laevis (African clawed frog)).